The chain runs to 56 residues: uncharacterized protein (56 aa).

This is an uncharacterized protein from Homo sapiens (Human).